A 220-amino-acid polypeptide reads, in one-letter code: Botcinic acid biosynthesis cluster B protein 12 (220 aa).

The protein operates within polyketide biosynthesis. In terms of biological role, part of the gene cluster B that mediates the biosynthesis of botcinic acid and its botcinin derivatives, acetate-derived polyketides that contribute to virulence when combined with the sesquiterpene botrydial. Botcinic acid and its derivatives have been shown to induce chlorosis and necrosis during host plant infection, but also have antifungal activities. Two polyketide synthases, BOA6 and BOA9, are involved in the biosynthesis of botcinins. BOA6 mediates the formation of the per-methylated tetraketide core by condensation of four units of malonyl-CoA with one unit of acetyl-CoA, which would be methylated in activated methylene groups to yield a bicyclic acid intermediate that could then either be converted to botrylactone derivatives or lose the starter acetate unit through a retro-Claisen type C-C bond cleavage to yield botcinin derivatives. The second polyketide synthase, BOA9, is probably required for the biosynthesis of the tetraketide side chain of botcinins. The methyltransferase (MT) domain within BOA6 is probably responsible for the incorporation of four methyl groups. The trans-enoyl reductase BOA5 might take over the enoyl reductase function of BOA6 that misses an ER domain. The monooxygenases BOA2, BOA3 and BOA4 might be involved in further hydroxylations at C4, C5 and C8, whereas BOA7, close to BOA9, could potentially be involved in the hydroxylation at C4 in the side chain of botcinins. This Botryotinia fuckeliana (strain B05.10) (Noble rot fungus) protein is Botcinic acid biosynthesis cluster B protein 12.